Here is a 238-residue protein sequence, read N- to C-terminus: 2-C-methyl-D-erythritol 4-phosphate cytidylyltransferase (238 aa).

The protein belongs to the IspD/TarI cytidylyltransferase family. IspD subfamily.

It carries out the reaction 2-C-methyl-D-erythritol 4-phosphate + CTP + H(+) = 4-CDP-2-C-methyl-D-erythritol + diphosphate. Its pathway is isoprenoid biosynthesis; isopentenyl diphosphate biosynthesis via DXP pathway; isopentenyl diphosphate from 1-deoxy-D-xylulose 5-phosphate: step 2/6. Functionally, catalyzes the formation of 4-diphosphocytidyl-2-C-methyl-D-erythritol from CTP and 2-C-methyl-D-erythritol 4-phosphate (MEP). The chain is 2-C-methyl-D-erythritol 4-phosphate cytidylyltransferase from Acinetobacter baumannii (strain ACICU).